The primary structure comprises 779 residues: Angiomotin-like protein 2 (779 aa).

2 disordered regions span residues 41-215 and 263-308; these read GGAG…QYPH and QYLQ…TSGS. 2 stretches are compositionally biased toward basic and acidic residues: residues 100-112 and 141-152; these read KGEELPTYEEAKA and RRQDEALRELRH. The segment at 101-307 is required for interaction with CDH5; the sequence is GEELPTYEEA…SAQASSATSG (207 aa). Residue Tyr-107 is modified to Phosphotyrosine; by FGFR1. The segment covering 160 to 169 has biased composition (low complexity); that stretch reads ERLLQLSLER. A compositionally biased stretch (polar residues) spans 177–193; it reads HMSSSHSFPQLARNQQG. The span at 196-213 shows a compositional bias: pro residues; the sequence is LRGPPAEGPESRGPPPQY. The interval 220–307 is required for interaction with CDH1; sequence HETTTAVTDP…SAQASSATSG (88 aa). The span at 298–308 shows a compositional bias: low complexity; sequence SAQASSATSGS. The stretch at 308 to 581 forms a coiled coil; sequence SAHLAQMEAV…KYLEERAMRQ (274 aa). Glycyl lysine isopeptide (Lys-Gly) (interchain with G-Cter in ubiquitin) cross-links involve residues Lys-347 and Lys-408. Disordered stretches follow at residues 522–543 and 679–753; these read RAQQRQAGAPGGSSGSGGSPEL and TQGW…GCSS. The span at 530 to 539 shows a compositional bias: gly residues; sequence APGGSSGSGG. 2 stretches are compositionally biased toward polar residues: residues 680 to 690 and 725 to 740; these read QGWQGLSSSER and DGSTQTEGPPDSTSTC. 2 positions are modified to phosphoserine: Ser-759 and Ser-762. A PDZ-binding motif is present at residues 776–779; the sequence is EILI.

The protein belongs to the angiomotin family. In terms of assembly, part of a complex composed of AMOTL2, MAGI1 and CDH5, within the complex AMOTL2 acts as a scaffold protein for the interaction of MAGI1 with CDH5. The complex is required for coupling actin fibers to cell junctions in endothelial cells. Within the complex AMOTL2 (via its N-terminus) interacts with CDH5. Interacts (via N-terminus) with MAGI1. Interacts (via N-terminus) with ACTB; the interaction facilitates binding of cell junction complexes to actin fibers in endothelial cells. Interacts with CDH1; the interaction may facilitate binding of radial actin fibers to cell junction complexes. Interacts with SRC. Interacts with YAP1; the interaction is required for ubiquitination of AMOTL2 and localization of YAP1 to tight junctions. Interacts with WWP1; the interaction facilitates WWP1 interaction with the Crumbs complex and subsequent WWP1 translocation to the plasma membrane. WWP1 interaction with the Crumbs complex promotes WWP1 monoubiquitination of AMOTL2 which subsequently activates the Hippo signaling pathway. When ubiquitinated interacts with LATS2 (via UBA domain); the interaction promotes LATS2 phosphorylation of YAP1. Interacts (via PPXY motif) with WWTR1/TAZ (via WW domain); the interaction promotes WWTR1/TAZ localization to the cytoplasm and thereby inhibition of its transcriptional properties. Interacts with PHLDB2; interaction may facilitate PHLDB2 localization to the myotube podosome cortex that surrounds the core. In terms of processing, monoubiquitinated at Lys-347 and Lys-408 by Crumbs complex-bound WWP1. De-ubiquitinated at Lys-347 and Lys-408 by USP9X; the interaction may be promoted by cell contact inhibition. Deubiquitination of AMOTL2 negatively regulates Hippo signaling activation. Phosphorylation at Tyr-107 is necessary for efficient binding to SRC and synergistically functioning with SRC to activate the downstream MAPK pathway.

The protein localises to the recycling endosome. The protein resides in the cytoplasm. Its subcellular location is the cell projection. It is found in the podosome. It localises to the cell junction. Functionally, regulates the translocation of phosphorylated SRC to peripheral cell-matrix adhesion sites. Required for proper architecture of actin filaments. Plays a role in coupling actin fibers to cell junctions in endothelial cells and is therefore required for correct endothelial cell morphology via facilitating transcellular transmission of mechanical force resulting in endothelial cell elongation. Required for the anchoring of radial actin fibers to CDH1 junction complexes at the cell membrane which facilitates organization of radial actin fiber structure and cellular response to contractile forces. This contributes to maintenance of cell area, size, shape, epithelial sheet organization and trophectoderm cell properties that facilitate blastocyst zona hatching. Inhibits the Wnt/beta-catenin signaling pathway, probably by recruiting CTNNB1 to recycling endosomes and hence preventing its translocation to the nucleus. Participates in angiogenesis. Activates the Hippo signaling pathway in response to cell contact inhibition via interaction with and ubiquitination by Crumbs complex-bound WWP1. Ubiquitinated AMOTL2 then interacts with LATS2 which in turn phosphorylates YAP1, excluding it from the nucleus and localizing it to the cytoplasm and tight junctions, therefore ultimately repressing YAP1-driven transcription of target genes. Acts to inhibit WWTR1/TAZ transcriptional coactivator activity via sequestering WWTR1/TAZ in the cytoplasm and at tight junctions. Regulates the size and protein composition of the podosome cortex and core at myofibril neuromuscular junctions. Selectively promotes FGF-induced MAPK activation through SRC. May play a role in the polarity, proliferation and migration of endothelial cells. The chain is Angiomotin-like protein 2 from Homo sapiens (Human).